We begin with the raw amino-acid sequence, 170 residues long: ATP synthase subunit b (170 aa).

The chain crosses the membrane as a helical span at residues 11–31; sequence AFTFGDAFFTLFAFAILLVLI.

It belongs to the ATPase B chain family. In terms of assembly, F-type ATPases have 2 components, F(1) - the catalytic core - and F(0) - the membrane proton channel. F(1) has five subunits: alpha(3), beta(3), gamma(1), delta(1), epsilon(1). F(0) has three main subunits: a(1), b(2) and c(10-14). The alpha and beta chains form an alternating ring which encloses part of the gamma chain. F(1) is attached to F(0) by a central stalk formed by the gamma and epsilon chains, while a peripheral stalk is formed by the delta and b chains.

It is found in the cell membrane. Functionally, f(1)F(0) ATP synthase produces ATP from ADP in the presence of a proton or sodium gradient. F-type ATPases consist of two structural domains, F(1) containing the extramembraneous catalytic core and F(0) containing the membrane proton channel, linked together by a central stalk and a peripheral stalk. During catalysis, ATP synthesis in the catalytic domain of F(1) is coupled via a rotary mechanism of the central stalk subunits to proton translocation. In terms of biological role, component of the F(0) channel, it forms part of the peripheral stalk, linking F(1) to F(0). This is ATP synthase subunit b from Listeria welshimeri serovar 6b (strain ATCC 35897 / DSM 20650 / CCUG 15529 / CIP 8149 / NCTC 11857 / SLCC 5334 / V8).